A 239-amino-acid polypeptide reads, in one-letter code: DNA repair protein RecO (239 aa).

This sequence belongs to the RecO family.

Its function is as follows. Involved in DNA repair and RecF pathway recombination. This Tolumonas auensis (strain DSM 9187 / NBRC 110442 / TA 4) protein is DNA repair protein RecO.